A 131-amino-acid polypeptide reads, in one-letter code: uncharacterized protein (131 aa).

The 99-residue stretch at 26–124 (CSVEVAVNEI…WGKMYGSHQE (99 aa)) folds into the HTH hxlR-type domain.

This is an uncharacterized protein from Methanothermobacter thermautotrophicus (strain ATCC 29096 / DSM 1053 / JCM 10044 / NBRC 100330 / Delta H) (Methanobacterium thermoautotrophicum).